The primary structure comprises 84 residues: Metallothionein type 2b (84 aa).

The protein belongs to the metallothionein superfamily. Type 15 family. As to expression, expressed in leaves, stems and roots.

Its subcellular location is the cytoplasm. The protein resides in the nucleus. Functionally, metallothioneins have a high content of cysteine residues that bind various heavy metals. Probably involved in maintaining homeostasis of essential transition metals and detoxification of toxic metals. Increases cadmium and zinc tolerance when expressed in heterologous systems. Metal chelator binding 6 cadmium or 5 zinc atoms per protein. This chain is Metallothionein type 2b, found in Colocasia esculenta (Wild taro).